Here is a 312-residue protein sequence, read N- to C-terminus: MSDAFCSDCKRHTEVVFDHSAGDTVCSECGLVLESHSIDETSEWRTFANESGDNDPVRVGGPTNPLLADGGLTTVISKPNGSSGDFLSSSLGRWQNRGSNPDRGLIVAFKTIATMADRLGLVATIKDRANEIYKRVEDQKSSRGRNQDALLAACLYIACRQEDKPRTVKEICSVANGATKKEIGRAKEYIVKQLGLETGQLVEMGTIHAGDFMRRFCSNLGMTNQTVKAAQESVQKSEEFDIRRSPISIAAAVIYIITQLSDEKKPLRDISVATGVAEGTIRNSYKDLYPHLSKIIPAWYAKEEDLKNLQSP.

Residues 2–34 (SDAFCSDCKRHTEVVFDHSAGDTVCSECGLVLE) form a TFIIB-type zinc finger. The Zn(2+) site is built by Cys-6, Cys-9, Cys-26, and Cys-29. 2 consecutive repeat copies span residues 115 to 192 (MADR…YIVK) and 216 to 290 (FCSN…DLYP).

Belongs to the TFIIB family. Associates with TFIID-IIA (DA complex) to form TFIID-IIA-IIB (DAB-complex) which is then recognized by polymerase II.

The protein localises to the nucleus. In terms of biological role, general factor that plays a major role in the activation of eukaryotic genes transcribed by RNA polymerase II. In Arabidopsis thaliana (Mouse-ear cress), this protein is Transcription initiation factor IIB-2 (TFIIB2).